The primary structure comprises 502 residues: Exodeoxyribonuclease 7 large subunit (502 aa).

Low complexity predominate over residues 474-495 (SAPSTTKKSAPKPAAPKAPKTP). The disordered stretch occupies residues 474–502 (SAPSTTKKSAPKPAAPKAPKTPGEQGSLF).

Belongs to the XseA family. In terms of assembly, heterooligomer composed of large and small subunits.

It localises to the cytoplasm. The enzyme catalyses Exonucleolytic cleavage in either 5'- to 3'- or 3'- to 5'-direction to yield nucleoside 5'-phosphates.. Bidirectionally degrades single-stranded DNA into large acid-insoluble oligonucleotides, which are then degraded further into small acid-soluble oligonucleotides. This is Exodeoxyribonuclease 7 large subunit from Ruegeria sp. (strain TM1040) (Silicibacter sp.).